The primary structure comprises 491 residues: Cadherin-3 (491 aa).

Cadherin domains are found at residues 1–102, 103–208, and 209–314; these read ENTV…PPVF, VPPS…DHGP, and VPEP…DPWT. Topologically, residues 1–316 are extracellular; sequence ENTVSHEVQR…VTCRDPWTWG (316 aa). The N-linked (GlcNAc...) asparagine glycan is linked to N228. A helical membrane pass occupies residues 317-339; that stretch reads FLLPILGAALALLLLLLVLLFLV. At 340–491 the chain is on the cytoplasmic side; sequence RKKRKIKEPL…ADMYGGGQDD (152 aa).

In terms of assembly, interacts with CDCP1 and CTNNB1.

Its subcellular location is the cell membrane. Functionally, cadherins are calcium-dependent cell adhesion proteins. They preferentially interact with themselves in a homophilic manner in connecting cells; cadherins may thus contribute to the sorting of heterogeneous cell types. This Bos taurus (Bovine) protein is Cadherin-3 (CDH3).